Reading from the N-terminus, the 221-residue chain is Probable transaldolase (221 aa).

K83 serves as the catalytic Schiff-base intermediate with substrate.

It belongs to the transaldolase family. Type 3B subfamily.

Its subcellular location is the cytoplasm. The catalysed reaction is D-sedoheptulose 7-phosphate + D-glyceraldehyde 3-phosphate = D-erythrose 4-phosphate + beta-D-fructose 6-phosphate. It participates in carbohydrate degradation; pentose phosphate pathway; D-glyceraldehyde 3-phosphate and beta-D-fructose 6-phosphate from D-ribose 5-phosphate and D-xylulose 5-phosphate (non-oxidative stage): step 2/3. In terms of biological role, transaldolase is important for the balance of metabolites in the pentose-phosphate pathway. In Herpetosiphon aurantiacus (strain ATCC 23779 / DSM 785 / 114-95), this protein is Probable transaldolase.